Here is a 265-residue protein sequence, read N- to C-terminus: Palmitoyltransferase ZDHHC21 (265 aa).

Over 1-16 (MGLRIHFVVDPHGWCC) the chain is Cytoplasmic. The helical transmembrane segment at 17 to 37 (MGLIVFVWLYNFFLIPKIVLF) threads the bilayer. Residues 38-44 (PHYEEGH) lie on the Extracellular side of the membrane. A helical transmembrane segment spans residues 45 to 65 (IPGILIIIFYGIAMFCLVALV). The Cytoplasmic portion of the chain corresponds to 66 to 133 (RASITDPGRL…NNCVGEDNHW (68 aa)). Residues 90–140 (ELCNKCNLMRPKRSHHCSRCGHCVRRMDHHCPWINNCVGEDNHWLFLQLCF) form the DHHC domain. The active-site S-palmitoyl cysteine intermediate is Cys-120. A helical membrane pass occupies residues 134 to 154 (LFLQLCFYTELLTCYALMFSF). Over 155–185 (CHYYYFLPLKKRNLDLFVVRHELAIMRLAAF) the chain is Extracellular. The helical transmembrane segment at 186 to 206 (MGITMLVGITGLFYTQLIGII) threads the bilayer. Topologically, residues 207-265 (TDTTSIEKMSNCCEEISRPRKPWQQTFSEVFGTRWKILWFIPFRRRQPLRVPYHFANHV) are cytoplasmic.

The protein belongs to the DHHC palmitoyltransferase family.

Its subcellular location is the golgi apparatus membrane. The protein resides in the golgi apparatus. It is found in the cis-Golgi network membrane. The protein localises to the cell membrane. It carries out the reaction L-cysteinyl-[protein] + hexadecanoyl-CoA = S-hexadecanoyl-L-cysteinyl-[protein] + CoA. Its function is as follows. Palmitoyltransferase that catalyzes the addition of palmitate onto various protein substrates. Palmitoylates sex steroid hormone receptors, including ESR1, PGR and AR, thereby regulating their targeting to the plasma membrane. This affects rapid intracellular signaling by sex hormones via ERK and AKT kinases and the generation of cAMP, but does not affect that mediated by their nuclear receptor. Palmitoylates FYN, regulates its localization in hair follicles and plays a key role in epidermal homeostasis and hair follicle differentiation. Through the palmitoylation of PLCB1 and the regulation of PLCB1 downstream signaling may indirectly regulate the function of the endothelial barrier and the adhesion of leukocytes to the endothelium. Also has a palmitoyltransferase activity toward ADRA1D, positively regulating its activity and expression and may thereby play a role in vascular contraction. May also palmitoylate eNOS and LCK. This Bos taurus (Bovine) protein is Palmitoyltransferase ZDHHC21.